Reading from the N-terminus, the 658-residue chain is Threonine--tRNA ligase (658 aa).

One can recognise a TGS domain in the interval methionine 1 to threonine 64. The tract at residues aspartate 246–proline 549 is catalytic. Residues cysteine 343, histidine 394, and histidine 526 each coordinate Zn(2+).

The protein belongs to the class-II aminoacyl-tRNA synthetase family. As to quaternary structure, homodimer. Zn(2+) is required as a cofactor.

The protein localises to the cytoplasm. The catalysed reaction is tRNA(Thr) + L-threonine + ATP = L-threonyl-tRNA(Thr) + AMP + diphosphate + H(+). Its function is as follows. Catalyzes the attachment of threonine to tRNA(Thr) in a two-step reaction: L-threonine is first activated by ATP to form Thr-AMP and then transferred to the acceptor end of tRNA(Thr). Also edits incorrectly charged L-seryl-tRNA(Thr). The polypeptide is Threonine--tRNA ligase (Bartonella quintana (strain Toulouse) (Rochalimaea quintana)).